Reading from the N-terminus, the 501-residue chain is Probable cytosol aminopeptidase (501 aa).

The Mn(2+) site is built by lysine 268 and aspartate 273. Lysine 280 is an active-site residue. Positions 291, 350, and 352 each coordinate Mn(2+). Residue arginine 354 is part of the active site.

This sequence belongs to the peptidase M17 family. Requires Mn(2+) as cofactor.

The protein localises to the cytoplasm. The enzyme catalyses Release of an N-terminal amino acid, Xaa-|-Yaa-, in which Xaa is preferably Leu, but may be other amino acids including Pro although not Arg or Lys, and Yaa may be Pro. Amino acid amides and methyl esters are also readily hydrolyzed, but rates on arylamides are exceedingly low.. The catalysed reaction is Release of an N-terminal amino acid, preferentially leucine, but not glutamic or aspartic acids.. Functionally, presumably involved in the processing and regular turnover of intracellular proteins. Catalyzes the removal of unsubstituted N-terminal amino acids from various peptides. This is Probable cytosol aminopeptidase from Nitrosococcus oceani (strain ATCC 19707 / BCRC 17464 / JCM 30415 / NCIMB 11848 / C-107).